Consider the following 456-residue polypeptide: Antizyme inhibitor 2 (456 aa).

Cys-357 functions as the Proton donor; shared with dimeric partner in the catalytic mechanism.

It belongs to the Orn/Lys/Arg decarboxylase class-II family. ODC antizyme inhibitor subfamily. In terms of assembly, monomer. Interacts with OAZ1; this interaction disrupts the interaction between the antizyme and ODC1. Does not form a heterodimer with ODC1.

The protein resides in the nucleus. It localises to the cytoplasm. Its subcellular location is the perinuclear region. It is found in the membrane. The protein localises to the cytoplasmic vesicle. The protein resides in the endoplasmic reticulum-Golgi intermediate compartment. It localises to the golgi apparatus. Its subcellular location is the cis-Golgi network. It is found in the trans-Golgi network. The protein localises to the cytoplasmic granule. The protein resides in the cell projection. It localises to the axon. Its subcellular location is the dendrite. It is found in the perikaryon. In terms of biological role, antizyme inhibitor (AZI) protein that positively regulates ornithine decarboxylase (ODC) activity and polyamine uptake. AZI is an enzymatically inactive ODC homolog that counteracts the negative effect of ODC antizyme (AZ) on ODC activity by competing with ODC for antizyme-binding. Inhibits antizyme-dependent ODC degradation and releases ODC monomers from their inactive complex with antizymes, leading to formation of the catalytically active ODC homodimer and restoring polyamine production. Participates in the morphological integrity of the trans-Golgi network (TGN) and functions as a regulator of intracellular secretory vesicle trafficking. This is Antizyme inhibitor 2 (azin2) from Xenopus laevis (African clawed frog).